Here is a 459-residue protein sequence, read N- to C-terminus: Paired box protein Pax-8 (459 aa).

The paired DNA-binding region spans 9 to 135 (GHGGLNQLGG…SSINRIIRTK (127 aa)). The tract at residues 12–68 (GLNQLGGAFVNGRPLPEVVRQRIVDLAHQGVRPCDISRQLRVSHGCVSKILGRYYET) is PAI subdomain. An RED subdomain region spans residues 87-135 (KVVEKIGDYKRQNPTMFAWEIRDRLLAEGVCDNDTVPSVSSINRIIRTK). Over residues 159–182 (LIPSSAVTPPESPQSDSLGSTYSI) the composition is skewed to polar residues. The interval 159–223 (LIPSSAVTPP…QSSSSGPRKH (65 aa)) is disordered. Ser305 carries the post-translational modification Phosphoserine.

As to quaternary structure, interacts with WWTR1.

The protein localises to the nucleus. Thought to encode a transcription factor. It may have a role in kidney cell differentiation. May play a regulatory role in mammalian development. The protein is Paired box protein Pax-8 (PAX8) of Canis lupus familiaris (Dog).